Reading from the N-terminus, the 310-residue chain is Putative dihydroorotate dehydrogenase A (fumarate) (310 aa).

Substrate-binding positions include Lys45, 69–73, and Asn128; that span reads NSMGL. 45–46 contacts FMN; it reads KT. Asn128 provides a ligand contact to FMN. Cys131 (nucleophile) is an active-site residue. FMN contacts are provided by Lys165 and Val193. 194–195 is a binding site for substrate; that stretch reads NS. FMN is bound by residues Gly220, 248–249, and 270–271; these read GG and GT.

It belongs to the dihydroorotate dehydrogenase family. Type 1 subfamily. As to quaternary structure, homodimer. FMN is required as a cofactor.

It is found in the cytoplasm. It catalyses the reaction (S)-dihydroorotate + fumarate = orotate + succinate. The protein operates within pyrimidine metabolism; UMP biosynthesis via de novo pathway. Catalyzes the conversion of dihydroorotate to orotate with fumarate as the electron acceptor. The sequence is that of Putative dihydroorotate dehydrogenase A (fumarate) (pyrD) from Streptococcus agalactiae serotype Ia (strain ATCC 27591 / A909 / CDC SS700).